A 325-amino-acid chain; its full sequence is Probable exonuclease subunit 1 (325 aa).

As to quaternary structure, could consist of two subunits: D13 and D12.

Possible exonuclease involved in phage DNA recombination, replication, and repair. The polypeptide is Probable exonuclease subunit 1 (D12) (Escherichia coli (Enterobacteria phage T5)).